Here is a 531-residue protein sequence, read N- to C-terminus: Nuclear RNA export factor 3 (531 aa).

Disordered stretches follow at residues 33–59 (RSEP…HGAH) and 83–106 (QDQT…GNMP). Over residues 41–50 (MHSSSHQQQD) the composition is skewed to polar residues. Basic and acidic residues predominate over residues 83-102 (QDQTHVNMEREQKPPERRME). Residues 113 to 192 (WFKITVPFGI…IFVNPAGIPH (80 aa)) form the RRM domain. Residues 344 to 494 (LVLQFLQQYY…LCIVNDKLFV (151 aa)) form the NTF2 domain.

This sequence belongs to the NXF family. In terms of assembly, interacts with NXT1, NXT2, E1B-AP5 and CRM1 nuclear export factor. As to expression, expressed at high level in testis and at low level in a small number of tissues.

Its subcellular location is the nucleus. The protein localises to the cytoplasm. Functionally, may function as a tissue-specific nuclear mRNA export factor. The sequence is that of Nuclear RNA export factor 3 (NXF3) from Homo sapiens (Human).